Consider the following 445-residue polypeptide: ATP synthase subunit b-delta (445 aa).

Residues 1-168 (MSTFIGQLVG…PAAAEVERPV (168 aa)) are ATP synthase subunit b. The helical transmembrane segment at 4 to 24 (FIGQLVGFAAIVFLVWRYVVP) threads the bilayer. The segment at 169 to 445 (AAKMRSASRR…LTAAEAQLPD (277 aa)) is ATP synthase subunit delta.

It in the N-terminal section; belongs to the ATPase B chain family. The protein in the C-terminal section; belongs to the ATPase delta chain family. As to quaternary structure, F-type ATPases have 2 components, F(1) - the catalytic core - and F(0) - the membrane proton channel. F(1) has five subunits: alpha(3), beta(3), gamma(1), delta(1), epsilon(1). F(0) has three main subunits: a(1), b(2) and c(10-14). The alpha and beta chains form an alternating ring which encloses part of the gamma chain. F(1) is attached to F(0) by a central stalk formed by the gamma and epsilon chains, while a peripheral stalk is formed by the delta and b chains.

It is found in the cell membrane. Functionally, f(1)F(0) ATP synthase produces ATP from ADP in the presence of a proton or sodium gradient. F-type ATPases consist of two structural domains, F(1) containing the extramembraneous catalytic core and F(0) containing the membrane proton channel, linked together by a central stalk and a peripheral stalk. During catalysis, ATP synthesis in the catalytic domain of F(1) is coupled via a rotary mechanism of the central stalk subunits to proton translocation. In terms of biological role, this fusion protein includes a component of the F(0) channel (subunit b) and of the F(1) subunit (subunit delta). Two copies of subunit b and one of delta together form the peripheral 'stator' stalk which links F(1) to F(0). The chain is ATP synthase subunit b-delta (atpFH) from Mycobacterium ulcerans (strain Agy99).